We begin with the raw amino-acid sequence, 415 residues long: Serine hydroxymethyltransferase (415 aa).

(6S)-5,6,7,8-tetrahydrofolate-binding positions include leucine 122 and 126–128 (GHL). Residue lysine 230 is modified to N6-(pyridoxal phosphate)lysine.

It belongs to the SHMT family. In terms of assembly, homodimer. The cofactor is pyridoxal 5'-phosphate.

The protein resides in the cytoplasm. The catalysed reaction is (6R)-5,10-methylene-5,6,7,8-tetrahydrofolate + glycine + H2O = (6S)-5,6,7,8-tetrahydrofolate + L-serine. It participates in one-carbon metabolism; tetrahydrofolate interconversion. Its pathway is amino-acid biosynthesis; glycine biosynthesis; glycine from L-serine: step 1/1. In terms of biological role, catalyzes the reversible interconversion of serine and glycine with tetrahydrofolate (THF) serving as the one-carbon carrier. This reaction serves as the major source of one-carbon groups required for the biosynthesis of purines, thymidylate, methionine, and other important biomolecules. Also exhibits THF-independent aldolase activity toward beta-hydroxyamino acids, producing glycine and aldehydes, via a retro-aldol mechanism. The protein is Serine hydroxymethyltransferase of Cupriavidus necator (strain ATCC 17699 / DSM 428 / KCTC 22496 / NCIMB 10442 / H16 / Stanier 337) (Ralstonia eutropha).